Here is a 163-residue protein sequence, read N- to C-terminus: Neurotrophin-3 (163 aa).

Positions Ile-1–Ser-3 are cleaved as a signal peptide. The propeptide occupies Thr-4–Arg-119. Asn-112 is a glycosylation site (N-linked (GlcNAc...) asparagine).

It belongs to the NGF-beta family.

The protein localises to the secreted. Its function is as follows. Seems to promote the survival of visceral and proprioceptive sensory neurons. This chain is Neurotrophin-3 (NTF3), found in Epicrates cenchria (Rainbow boa).